Reading from the N-terminus, the 755-residue chain is Protein phosphatase 1E (755 aa).

A disordered region spans residues 21–131; the sequence is EFRGPCGGGE…PPLPPLPRPL (111 aa). 7 tandem repeats follow at residues 31–32, 33–34, 35–36, 37–38, 39–40, 41–42, and 43–44. The 11 X 2 AA tandem repeats of P-E stretch occupies residues 31-52; sequence PEPEPEPEPEPEPESEPEPEPE. Acidic residues-rich tracts occupy residues 31–68 and 77–101; these read PEPE…EPGE and EEGD…EEEG. An 8; approximate repeat occupies 45–46; the sequence is SE. Tandem repeats lie at residues 47-48, 49-50, and 51-52. Positions 102–113 are enriched in low complexity; the sequence is AATAAAAPGHSA. The span at 114–129 shows a compositional bias: pro residues; it reads VPPPPPQLPPLPPLPR. In terms of domain architecture, PPM-type phosphatase spans 231–488; it reads ETSIHAIKNM…DNITVIVVFL (258 aa). Positions 273, 274, 435, and 479 each coordinate Mn(2+). The tract at residues 498–537 is disordered; that stretch reads SEESDWTENSFQGGQEDGGDDKENHGECKRPWPQHQCSAP. Residues 518 to 527 are compositionally biased toward basic and acidic residues; it reads DKENHGECKR. Residues Ser-535 and Ser-548 each carry the phosphoserine modification.

This sequence belongs to the PP2C family. As to quaternary structure, heterotrimer. Interacts with PAX1 and ARHGEF6 (or ARHGEF7). Mg(2+) is required as a cofactor. Requires Mn(2+) as cofactor.

The protein localises to the nucleus. The protein resides in the cytoplasm. The enzyme catalyses O-phospho-L-seryl-[protein] + H2O = L-seryl-[protein] + phosphate. It carries out the reaction O-phospho-L-threonyl-[protein] + H2O = L-threonyl-[protein] + phosphate. In terms of biological role, protein phosphatase that inactivates multifunctional CaM kinases such as CAMK4 and CAMK2. Dephosphorylates and inactivates PAK. May play a role in the inhibition of actin fiber stress breakdown and in morphological changes driven by TNK2/CDC42. Dephosphorylates PRKAA2. This chain is Protein phosphatase 1E (PPM1E), found in Homo sapiens (Human).